A 367-amino-acid chain; its full sequence is D-alanine--D-alanine ligase (367 aa).

The 206-residue stretch at 141-346 folds into the ATP-grasp domain; it reads KNLFAQAGLR…YPELIERLIA (206 aa). 174 to 229 contributes to the ATP binding site; sequence ERELGYPCFVKPANAGSSVGISKCKQRGDLKAAFIEAFQYDRKIIIEEAIVGREIE. Mg(2+) is bound by residues Asp300, Glu313, and Asn315.

The protein belongs to the D-alanine--D-alanine ligase family. Mg(2+) serves as cofactor. The cofactor is Mn(2+).

It localises to the cytoplasm. It carries out the reaction 2 D-alanine + ATP = D-alanyl-D-alanine + ADP + phosphate + H(+). Its pathway is cell wall biogenesis; peptidoglycan biosynthesis. Functionally, cell wall formation. This is D-alanine--D-alanine ligase from Geobacillus kaustophilus (strain HTA426).